A 513-amino-acid polypeptide reads, in one-letter code: ATP synthase subunit alpha (513 aa).

169–176 is an ATP binding site; it reads GDRQTGKT.

It belongs to the ATPase alpha/beta chains family. In terms of assembly, F-type ATPases have 2 components, CF(1) - the catalytic core - and CF(0) - the membrane proton channel. CF(1) has five subunits: alpha(3), beta(3), gamma(1), delta(1), epsilon(1). CF(0) has three main subunits: a(1), b(2) and c(9-12). The alpha and beta chains form an alternating ring which encloses part of the gamma chain. CF(1) is attached to CF(0) by a central stalk formed by the gamma and epsilon chains, while a peripheral stalk is formed by the delta and b chains.

It localises to the cell inner membrane. It carries out the reaction ATP + H2O + 4 H(+)(in) = ADP + phosphate + 5 H(+)(out). Produces ATP from ADP in the presence of a proton gradient across the membrane. The alpha chain is a regulatory subunit. The polypeptide is ATP synthase subunit alpha (Shewanella loihica (strain ATCC BAA-1088 / PV-4)).